We begin with the raw amino-acid sequence, 552 residues long: CTP synthase (552 aa).

The segment at 1–270 is amidoligase domain; the sequence is MTKYVFVTGG…DRIICEELKL (270 aa). Ser-13 is a binding site for CTP. Ser-13 contacts UTP. ATP contacts are provided by residues 14-19 and Asp-71; that span reads SLGKGI. Positions 71 and 144 each coordinate Mg(2+). CTP is bound by residues 151 to 153, 191 to 196, and Lys-227; these read DIE and KTKPTQ. Residues 191 to 196 and Lys-227 contribute to the UTP site; that span reads KTKPTQ. Residues 295–547 enclose the Glutamine amidotransferase type-1 domain; the sequence is TIGMVGKYVD…VEAALANKQA (253 aa). Gly-356 is an L-glutamine binding site. Cys-383 serves as the catalytic Nucleophile; for glutamine hydrolysis. L-glutamine is bound by residues 384–387, Glu-407, and Arg-473; that span reads LGMQ. Residues His-520 and Glu-522 contribute to the active site.

The protein belongs to the CTP synthase family. In terms of assembly, homotetramer.

It catalyses the reaction UTP + L-glutamine + ATP + H2O = CTP + L-glutamate + ADP + phosphate + 2 H(+). The catalysed reaction is L-glutamine + H2O = L-glutamate + NH4(+). The enzyme catalyses UTP + NH4(+) + ATP = CTP + ADP + phosphate + 2 H(+). It functions in the pathway pyrimidine metabolism; CTP biosynthesis via de novo pathway; CTP from UDP: step 2/2. Allosterically activated by GTP, when glutamine is the substrate; GTP has no effect on the reaction when ammonia is the substrate. The allosteric effector GTP functions by stabilizing the protein conformation that binds the tetrahedral intermediate(s) formed during glutamine hydrolysis. Inhibited by the product CTP, via allosteric rather than competitive inhibition. Catalyzes the ATP-dependent amination of UTP to CTP with either L-glutamine or ammonia as the source of nitrogen. Regulates intracellular CTP levels through interactions with the four ribonucleotide triphosphates. The sequence is that of CTP synthase from Burkholderia ambifaria (strain MC40-6).